A 340-amino-acid chain; its full sequence is Phosphoribosylformylglycinamidine cyclo-ligase (340 aa).

This sequence belongs to the AIR synthase family.

The protein localises to the cytoplasm. It carries out the reaction 2-formamido-N(1)-(5-O-phospho-beta-D-ribosyl)acetamidine + ATP = 5-amino-1-(5-phospho-beta-D-ribosyl)imidazole + ADP + phosphate + H(+). Its pathway is purine metabolism; IMP biosynthesis via de novo pathway; 5-amino-1-(5-phospho-D-ribosyl)imidazole from N(2)-formyl-N(1)-(5-phospho-D-ribosyl)glycinamide: step 2/2. This is Phosphoribosylformylglycinamidine cyclo-ligase from Streptococcus pyogenes serotype M18 (strain MGAS8232).